A 249-amino-acid polypeptide reads, in one-letter code: Tetrahydromethanopterin S-methyltransferase subunit D (249 aa).

6 consecutive transmembrane segments (helical) span residues 9–29, 47–67, 75–95, 138–158, 183–203, and 224–244; these read ILWL…VHFV, GTVQ…GFMM, LILA…MIVG, VSFV…ALVY, LVGI…VIPS, and AVIS…IAIS.

It belongs to the MtrD family. The complex is composed of 8 subunits; MtrA, MtrB, MtrC, MtrD, MtrE, MtrF, MtrG and MtrH.

It is found in the cell membrane. It carries out the reaction 5-methyl-5,6,7,8-tetrahydromethanopterin + coenzyme M + 2 Na(+)(in) = 5,6,7,8-tetrahydromethanopterin + methyl-coenzyme M + 2 Na(+)(out). It participates in one-carbon metabolism; methanogenesis from CO(2); methyl-coenzyme M from 5,10-methylene-5,6,7,8-tetrahydromethanopterin: step 2/2. Part of a complex that catalyzes the formation of methyl-coenzyme M and tetrahydromethanopterin from coenzyme M and methyl-tetrahydromethanopterin. This is an energy-conserving, sodium-ion translocating step. In Methanosarcina acetivorans (strain ATCC 35395 / DSM 2834 / JCM 12185 / C2A), this protein is Tetrahydromethanopterin S-methyltransferase subunit D.